We begin with the raw amino-acid sequence, 150 residues long: Arginine repressor (150 aa).

This sequence belongs to the ArgR family.

It localises to the cytoplasm. Its pathway is amino-acid biosynthesis; L-arginine biosynthesis [regulation]. In terms of biological role, regulates arginine biosynthesis genes. The protein is Arginine repressor of Clostridium beijerinckii (strain ATCC 51743 / NCIMB 8052) (Clostridium acetobutylicum).